The following is a 1028-amino-acid chain: Golgin subfamily A member 2 (1028 aa).

Positions Met1–Leu112 are disordered. Positions Lys40 to Val60 are enriched in basic and acidic residues. The segment covering Asn74–Gln87 has biased composition (polar residues). Coiled coils occupy residues Asn162–Ala200, Ala233–Gln388, Arg414–Gly690, Leu738–Leu769, and His799–Glu840. Residues Arg259–Lys280 are disordered. The disordered stretch occupies residues Arg756 to Ser791. The segment at Ala944 to Asp981 is disordered. Positions Met945–Glu964 are enriched in polar residues.

Belongs to the GOLGA2 family.

It localises to the golgi apparatus. Its subcellular location is the cis-Golgi network membrane. The protein resides in the endoplasmic reticulum-Golgi intermediate compartment membrane. It is found in the cytoplasm. The protein localises to the cytoskeleton. It localises to the spindle pole. Its function is as follows. Peripheral membrane component of the cis-Golgi stack that acts as a membrane skeleton that maintains the structure of the Golgi apparatus, and as a vesicle thether that facilitates vesicle fusion to the Golgi membrane. Required for normal protein transport from the endoplasmic reticulum to the Golgi apparatus and the cell membrane. Plays a central role in mitotic Golgi disassembly. Also plays a key role in spindle pole assembly and centrosome organization. It probably promotes mitotic spindle pole assembly by activating assembly factors to nucleate microtubules around the Golgi and capture them to couple mitotic membranes to the spindle. Also required for the Golgi ribbon formation and glycosylation of membrane and secretory proteins. The chain is Golgin subfamily A member 2 from Danio rerio (Zebrafish).